We begin with the raw amino-acid sequence, 274 residues long: Large ribosomal subunit protein uL2 (274 aa).

Disordered stretches follow at residues 28–54 (APHAPLLEKKSKSGGRNNNGRITTRHI) and 224–274 (VAMN…RRRK). Basic and acidic residues predominate over residues 263–274 (KRTDKMIVRRRK).

This sequence belongs to the universal ribosomal protein uL2 family. Part of the 50S ribosomal subunit. Forms a bridge to the 30S subunit in the 70S ribosome.

One of the primary rRNA binding proteins. Required for association of the 30S and 50S subunits to form the 70S ribosome, for tRNA binding and peptide bond formation. It has been suggested to have peptidyltransferase activity; this is somewhat controversial. Makes several contacts with the 16S rRNA in the 70S ribosome. The chain is Large ribosomal subunit protein uL2 from Pseudomonas savastanoi pv. phaseolicola (strain 1448A / Race 6) (Pseudomonas syringae pv. phaseolicola (strain 1448A / Race 6)).